The chain runs to 262 residues: Acyl-[acyl-carrier-protein]--UDP-N-acetylglucosamine O-acyltransferase (262 aa).

This sequence belongs to the transferase hexapeptide repeat family. LpxA subfamily. As to quaternary structure, homotrimer.

The protein localises to the cytoplasm. It catalyses the reaction a (3R)-hydroxyacyl-[ACP] + UDP-N-acetyl-alpha-D-glucosamine = a UDP-3-O-[(3R)-3-hydroxyacyl]-N-acetyl-alpha-D-glucosamine + holo-[ACP]. The protein operates within glycolipid biosynthesis; lipid IV(A) biosynthesis; lipid IV(A) from (3R)-3-hydroxytetradecanoyl-[acyl-carrier-protein] and UDP-N-acetyl-alpha-D-glucosamine: step 1/6. Its function is as follows. Involved in the biosynthesis of lipid A, a phosphorylated glycolipid that anchors the lipopolysaccharide to the outer membrane of the cell. The chain is Acyl-[acyl-carrier-protein]--UDP-N-acetylglucosamine O-acyltransferase from Burkholderia thailandensis (strain ATCC 700388 / DSM 13276 / CCUG 48851 / CIP 106301 / E264).